The following is a 142-amino-acid chain: Putative tyrosine phosphatase 123R (142 aa).

The Tyrosine-protein phosphatase domain occupies 2–137 (EPTKIVENLY…LAQFERWLNS (136 aa)). Cys81 acts as the Phosphocysteine intermediate in catalysis.

This sequence belongs to the protein-tyrosine phosphatase family.

This Invertebrate iridescent virus 6 (IIV-6) protein is Putative tyrosine phosphatase 123R.